Reading from the N-terminus, the 409-residue chain is 5-aminolevulinate synthase (409 aa).

Succinyl-CoA is bound by residues Arg-21, Ser-137, and Lys-156. Pyridoxal 5'-phosphate contacts are provided by Ser-189, His-217, and Thr-245. Lys-248 is an active-site residue. Lys-248 bears the N6-(pyridoxal phosphate)lysine mark. Residues Ser-277 and Thr-278 each coordinate pyridoxal 5'-phosphate. Thr-365 is a succinyl-CoA binding site.

This sequence belongs to the class-II pyridoxal-phosphate-dependent aminotransferase family. In terms of assembly, homodimer. It depends on pyridoxal 5'-phosphate as a cofactor.

It catalyses the reaction succinyl-CoA + glycine + H(+) = 5-aminolevulinate + CO2 + CoA. The protein operates within porphyrin-containing compound metabolism; protoporphyrin-IX biosynthesis; 5-aminolevulinate from glycine: step 1/1. This chain is 5-aminolevulinate synthase (hemA), found in Rhodobacter capsulatus (strain ATCC BAA-309 / NBRC 16581 / SB1003).